Reading from the N-terminus, the 369-residue chain is Serine/threonine-protein phosphatase PP2A-1 catalytic subunit (369 aa).

The disordered stretch occupies residues 1–57 (MDTDLDVPMQDAVTEQLTPTVSEDMDLNNNSSDNNAEEFSVDDLKPGSSGIADHKSS). Residues aspartate 117, histidine 119, aspartate 145, and asparagine 177 each coordinate Mn(2+). The active-site Proton donor is histidine 178. Mn(2+) contacts are provided by histidine 227 and histidine 301. A disordered region spans residues 348-369 (QYDPSVRPGEPSVSRKTPDYFL). Leucine 369 is subject to Leucine methyl ester.

It belongs to the PPP phosphatase family. PP-2A subfamily. In terms of assembly, inactivated in a complex with phosphatase methylesterase PPE1 (PP2Ai). Interacts with phosphatase 2A activator RRD2, which can reactivate PP2Ai by dissociating the catalytic subunit from the complex. Forms a ternary complex with RRD2-TAP42. Mn(2+) is required as a cofactor. Post-translationally, reversibly methyl esterified on Leu-369 by leucine carboxyl methyltransferase 1 (PPM1) and protein phosphatase methylesterase 1 (PPE1). Carboxyl methylation influences the affinity of the catalytic subunit for the different regulatory subunits, thereby modulating the PP2A holoenzyme's substrate specificity, enzyme activity and cellular localization.

It carries out the reaction O-phospho-L-seryl-[protein] + H2O = L-seryl-[protein] + phosphate. The enzyme catalyses O-phospho-L-threonyl-[protein] + H2O = L-threonyl-[protein] + phosphate. Its function is as follows. Exact function not known, phosphatase 2A performs an essential cellular function. The sequence is that of Serine/threonine-protein phosphatase PP2A-1 catalytic subunit (PPH21) from Saccharomyces cerevisiae (strain ATCC 204508 / S288c) (Baker's yeast).